Here is a 511-residue protein sequence, read N- to C-terminus: Phosphoenolpyruvate carboxylase (511 aa).

Belongs to the PEPCase type 2 family. In terms of assembly, homotetramer. Mg(2+) is required as a cofactor.

It carries out the reaction oxaloacetate + phosphate = phosphoenolpyruvate + hydrogencarbonate. In terms of biological role, catalyzes the irreversible beta-carboxylation of phosphoenolpyruvate (PEP) to form oxaloacetate (OAA), a four-carbon dicarboxylic acid source for the tricarboxylic acid cycle. The sequence is that of Phosphoenolpyruvate carboxylase from Saccharolobus islandicus (strain Y.G.57.14 / Yellowstone #1) (Sulfolobus islandicus).